A 76-amino-acid chain; its full sequence is ATP synthase subunit 9, mitochondrial (76 aa).

2 helical membrane-spanning segments follow: residues 14–34 and 48–68; these read ISTI…AALI and FPFA…CLMV.

This sequence belongs to the ATPase C chain family. As to quaternary structure, F-type ATPases have 2 components, CF(1) - the catalytic core - and CF(0) - the membrane proton channel. CF(1) has five subunits: alpha(3), beta(3), gamma(1), delta(1), epsilon(1). CF(0) has three main subunits: a, b and c.

The protein resides in the mitochondrion membrane. Its function is as follows. Mitochondrial membrane ATP synthase (F(1)F(0) ATP synthase or Complex V) produces ATP from ADP in the presence of a proton gradient across the membrane which is generated by electron transport complexes of the respiratory chain. F-type ATPases consist of two structural domains, F(1) - containing the extramembraneous catalytic core and F(0) - containing the membrane proton channel, linked together by a central stalk and a peripheral stalk. During catalysis, ATP synthesis in the catalytic domain of F(1) is coupled via a rotary mechanism of the central stalk subunits to proton translocation. Part of the complex F(0) domain. A homomeric c-ring of probably 10 subunits is part of the complex rotary element. The protein is ATP synthase subunit 9, mitochondrial (ATP9) of Cyberlindnera mrakii (Yeast).